We begin with the raw amino-acid sequence, 209 residues long: 7-carboxy-7-deazaguanine synthase (209 aa).

Substrate is bound by residues 10 to 12 (IQG) and Arg-25. The Radical SAM core domain occupies 16–205 (YAGLPMLFVR…PQIHKIIYGD (190 aa)). Positions 29, 33, and 36 each coordinate [4Fe-4S] cluster. Thr-38 contacts Mg(2+). Thr-68 is a substrate binding site. Residue Gly-70 participates in S-adenosyl-L-methionine binding.

This sequence belongs to the radical SAM superfamily. 7-carboxy-7-deazaguanine synthase family. In terms of assembly, homodimer. It depends on [4Fe-4S] cluster as a cofactor. The cofactor is S-adenosyl-L-methionine. Mg(2+) is required as a cofactor.

The catalysed reaction is 6-carboxy-5,6,7,8-tetrahydropterin + H(+) = 7-carboxy-7-deazaguanine + NH4(+). Its pathway is purine metabolism; 7-cyano-7-deazaguanine biosynthesis. In terms of biological role, catalyzes the complex heterocyclic radical-mediated conversion of 6-carboxy-5,6,7,8-tetrahydropterin (CPH4) to 7-carboxy-7-deazaguanine (CDG), a step common to the biosynthetic pathways of all 7-deazapurine-containing compounds. In Thermoplasma acidophilum (strain ATCC 25905 / DSM 1728 / JCM 9062 / NBRC 15155 / AMRC-C165), this protein is 7-carboxy-7-deazaguanine synthase.